A 368-amino-acid polypeptide reads, in one-letter code: UDP-N-acetylglucosamine--N-acetylmuramyl-(pentapeptide) pyrophosphoryl-undecaprenol N-acetylglucosamine transferase (368 aa).

UDP-N-acetyl-alpha-D-glucosamine-binding positions include 10–12, asparagine 124, serine 196, isoleucine 251, and glutamine 296; that span reads TGG.

It belongs to the glycosyltransferase 28 family. MurG subfamily.

It is found in the cell membrane. It catalyses the reaction Mur2Ac(oyl-L-Ala-gamma-D-Glu-L-Lys-D-Ala-D-Ala)-di-trans,octa-cis-undecaprenyl diphosphate + UDP-N-acetyl-alpha-D-glucosamine = beta-D-GlcNAc-(1-&gt;4)-Mur2Ac(oyl-L-Ala-gamma-D-Glu-L-Lys-D-Ala-D-Ala)-di-trans,octa-cis-undecaprenyl diphosphate + UDP + H(+). Its pathway is cell wall biogenesis; peptidoglycan biosynthesis. Its function is as follows. Cell wall formation. Catalyzes the transfer of a GlcNAc subunit on undecaprenyl-pyrophosphoryl-MurNAc-pentapeptide (lipid intermediate I) to form undecaprenyl-pyrophosphoryl-MurNAc-(pentapeptide)GlcNAc (lipid intermediate II). The sequence is that of UDP-N-acetylglucosamine--N-acetylmuramyl-(pentapeptide) pyrophosphoryl-undecaprenol N-acetylglucosamine transferase from Limosilactobacillus fermentum (strain NBRC 3956 / LMG 18251) (Lactobacillus fermentum).